The primary structure comprises 140 residues: Large ribosomal subunit protein uL11 (140 aa).

The protein belongs to the universal ribosomal protein uL11 family. As to quaternary structure, part of the ribosomal stalk of the 50S ribosomal subunit. Interacts with L10 and the large rRNA to form the base of the stalk. L10 forms an elongated spine to which L12 dimers bind in a sequential fashion forming a multimeric L10(L12)X complex. In terms of processing, one or more lysine residues are methylated.

Functionally, forms part of the ribosomal stalk which helps the ribosome interact with GTP-bound translation factors. The sequence is that of Large ribosomal subunit protein uL11 from Thermoanaerobacter pseudethanolicus (strain ATCC 33223 / 39E) (Clostridium thermohydrosulfuricum).